The sequence spans 88 residues: Putative membrane protein insertion efficiency factor (88 aa).

This sequence belongs to the UPF0161 family.

It localises to the cell inner membrane. Its function is as follows. Could be involved in insertion of integral membrane proteins into the membrane. In Rickettsia canadensis (strain McKiel), this protein is Putative membrane protein insertion efficiency factor.